The sequence spans 134 residues: UPF0412 protein YaaI (134 aa).

The first 23 residues, 1 to 23 (MRSVLTISAGLLFGLALSSVAHA), serve as a signal peptide directing secretion.

It belongs to the UPF0412 family.

The chain is UPF0412 protein YaaI from Salmonella agona (strain SL483).